A 146-amino-acid chain; its full sequence is Cytochrome c' (146 aa).

The first 21 residues, 1-21 (MKLRIATIAGLVVLGSGFAVA), serve as a signal peptide directing secretion. Residues R29, T86, A87, C134, C137, and H138 each contribute to the heme c site.

In terms of assembly, monomer. Binds 1 heme c group covalently per subunit.

Its function is as follows. Cytochrome c' is the most widely occurring bacterial c-type cytochrome. Cytochromes c' are high-spin proteins and the heme has no sixth ligand. Their exact function is not known. This is Cytochrome c' (cycA) from Rhodopseudomonas palustris (strain ATCC BAA-98 / CGA009).